The sequence spans 163 residues: Ubiquitin-like protein 1-ribosomal protein eS31 fusion protein (163 aa).

Residues 1-70 (MVFVKTLNRT…IYVNLELLGG (70 aa)) enclose the Ubiquitin-like domain. Residue Gly70 forms a Glycyl lysine isopeptide (Gly-Lys) (interchain with K-? in acceptor proteins) linkage. The C4-type zinc finger occupies 115-138 (CQQPSCGGGVFMAQHANRHYCGRC).

It in the N-terminal section; belongs to the ubiquitin family. This sequence in the C-terminal section; belongs to the eukaryotic ribosomal protein eS31 family.

The protein is Ubiquitin-like protein 1-ribosomal protein eS31 fusion protein (ubl-1) of Caenorhabditis briggsae.